We begin with the raw amino-acid sequence, 173 residues long: Nanos homolog 3 (173 aa).

The disordered stretch occupies residues 23–51; that stretch reads KEGPETRLSPQPEPEPMLEPDQKRSLESS. The Nanos-type zinc-finger motif lies at 57–111; that stretch reads LCSFCKHNGESRAIYQSHVLKDEAGRVLCPILRDYVCPQCGATRERAHTRRFCPL. The Zn(2+) site is built by cysteine 58, cysteine 61, histidine 74, cysteine 85, cysteine 93, cysteine 96, histidine 104, and cysteine 109. 2 short sequence motifs (C2HC) span residues 58-85 and 93-109; these read CSFC…RVLC and CPQC…RRFC. Positions 123 to 173 are disordered; that stretch reads TTRNSAGKKLVRPDKAKTQDTGHRRGGGGGAGFRGAGKSEPSPSCSPSMST. Positions 133 to 145 are enriched in basic and acidic residues; the sequence is VRPDKAKTQDTGH. The span at 161–173 shows a compositional bias: low complexity; that stretch reads SEPSPSCSPSMST.

Belongs to the nanos family. Binds mRNA from germ cells. Interacts with PUM2. Ovary, testis and brain (at protein level). In the ovaries, expressed during multiple stages of oogenesis, including primordial, primary, secondary and antral follicles with the highest expression in the oocytes. In the testis, expressed in germ cells, type A spermatogonia (SA), primary spermatocytes (S1), round spermatids (S3) and elongated spermatids.

The protein localises to the nucleus. The protein resides in the cytoplasm. Its subcellular location is the stress granule. It is found in the P-body. Plays a role in the maintenance of the undifferentiated state of germ cells regulating the spermatogonia cell cycle and inducing a prolonged transit in G1 phase. Affects cell proliferation probably by repressing translation of specific mRNAs. Maintains the germ cell lineage by suppressing both Bax-dependent and -independent apoptotic pathways. Essential in the early stage embryo to protect the migrating primordial germ cells (PGCs) from apoptosis. The protein is Nanos homolog 3 (NANOS3) of Homo sapiens (Human).